The sequence spans 22 residues: Melittin-like peptide (22 aa).

Q22 carries the glutamine amide modification.

Expressed by the skin dorsal glands.

It localises to the secreted. The protein is Melittin-like peptide of Rana temporaria (European common frog).